We begin with the raw amino-acid sequence, 290 residues long: Protein MGF 110-9L (290 aa).

The next 3 membrane-spanning stretches (helical) occupy residues 1 to 19 (MKVI…VIQN), 128 to 148 (VENI…MVYI), and 163 to 183 (LLIF…IIMN). Asparagine 242 and asparagine 267 each carry an N-linked (GlcNAc...) asparagine; by host glycan.

The protein belongs to the asfivirus MGF 110 family.

It is found in the host membrane. Plays a role in virus cell tropism, and may be required for efficient virus replication in macrophages. This is Protein MGF 110-9L from Ornithodoros (relapsing fever ticks).